A 3411-amino-acid polypeptide reads, in one-letter code: Genome polyprotein (3411 aa).

Residues 1-104 (MSGRKAQGKT…LSSRKRRSHD (104 aa)) are Cytoplasmic-facing. A hydrophobic; homodimerization of capsid protein C region spans residues 38–72 (PGPSRGVQGFIFFFLFNILTGKKITAQLKRLWKML). Residues 102 to 121 (SHDVLTVQFLILGMLLMTGG) constitute a propeptide, ER anchor for the capsid protein C, removed in mature form by serine protease NS3. The helical transmembrane segment at 105 to 125 (VLTVQFLILGMLLMTGGVTLM) threads the bilayer. Topologically, residues 126–244 (RKNRWLLLNV…GERQLQKIER (119 aa)) are extracellular. Residues Asn-134 and Asn-150 are each glycosylated (N-linked (GlcNAc...) asparagine; by host). The chain crosses the membrane as a helical span at residues 245-265 (WFVRNPFFAVTALTIAYLVGS). At 266 to 270 (NMTQR) the chain is on the cytoplasmic side. Residues 271–285 (VVIALLVLAVGPAYS) form a helical membrane-spanning segment. At 286–730 (AHCIGVADRD…TVFGSAFQGL (445 aa)) the chain is on the extracellular side. Cystine bridges form between Cys-288–Cys-315, Cys-345–Cys-401, Cys-345–Cys-406, Cys-359–Cys-390, Cys-377–Cys-401, Cys-377–Cys-406, Cys-467–Cys-568, and Cys-585–Cys-615. Residues 383 to 396 (DRGWGNGCGLFGKG) form a fusion peptide region. The chain crosses the membrane as a helical span at residues 731-751 (FGGLNWITKVIMGAVLIWVGF). The Cytoplasmic segment spans residues 752–757 (NTRNMT). Residues 758–778 (MSMSMILVGVIMMFLSLGVGA) traverse the membrane as a helical segment. Over 779–1132 (DQGCAINFGK…LVRSWVTAGE (354 aa)) the chain is Extracellular. 6 disulfides stabilise this stretch: Cys-782/Cys-793, Cys-833/Cys-921, Cys-957/Cys-1002, Cys-1058/Cys-1107, Cys-1069/Cys-1091, and Cys-1090/Cys-1094. Asn-908 and Asn-986 each carry an N-linked (GlcNAc...) asparagine; by host glycan. Residues 1133–1153 (IHAVPFGLVSMMIAMEVVLRK) form a helical membrane-spanning segment. Residues 1154–1201 (RQGPKQVLVGGVVLLGAMLVGQVTLLDLLELTVAVGLHFHEMNNGGDA) lie on the Cytoplasmic side of the membrane. The helical transmembrane segment at 1202-1222 (MYMALIAAFSVRPGLLIGFGL) threads the bilayer. Residues 1223–1287 (RTLWSPRERL…ILPLMALLTP (65 aa)) lie on the Lumenal side of the membrane. The chain crosses the membrane as a helical span at residues 1288–1308 (VTMAEVRLATMLFCTVVIIGV). Residues 1309-1355 (LHQNSKDTSMQKTIPLVALTLTSYLGLTQPFLGLCAFLATRIFGRRS) lie on the Cytoplasmic side of the membrane. A helical membrane pass occupies residues 1356 to 1376 (IPVNEALAATGLVGVLAGLAF). At 1377-1378 (QE) the chain is on the lumenal side. A helical transmembrane segment spans residues 1379–1399 (MENFLGPIAVGGILMMLVSVA). At 1400–1456 (GRVDGLELKKLGEVSWEEEAEISGSSARYDVALSEQGEFKLLSEEKVPWDQVVMTSL) the chain is on the cytoplasmic side. Residues 1407–1446 (LKKLGEVSWEEEAEISGSSARYDVALSEQGEFKLLSEEKV) form an interacts with and activates NS3 protease region. Residues 1457–1477 (ALVGAAIHPFALLLVLAGWLF) constitute an intramembrane region (helical). Residues 1478–2157 (HVRRARRSGD…RNALSMMPEA (680 aa)) lie on the Cytoplasmic side of the membrane. Residues 1485–1665 (SGDVLWDIPT…EVKEEGKEEL (181 aa)) enclose the Peptidase S7 domain. Active-site charge relay system; for serine protease NS3 activity residues include His-1537, Asp-1561, and Ser-1622. The Helicase ATP-binding domain maps to 1669-1825 (PTMLKKGKTT…HSNGEIEDVQ (157 aa)). Residues 1673–1676 (KKGK) are important for RNA-binding. 1682–1689 (FHPGAGKT) provides a ligand contact to ATP. The DEAH box signature appears at 1773–1776 (DEAH). A Helicase C-terminal domain is found at 1820 to 1997 (EIEDVQTDIP…VRGGMVAPLY (178 aa)). Lys-1877 bears the N6-acetyllysine; by host mark. The disordered stretch occupies residues 1942-1961 (AAQRRGRIGRNPNRDGDSYY). Residues 2158-2178 (MTIVMLFLLAGLLTSGMVIFF) form a helical membrane-spanning segment. The Lumenal portion of the chain corresponds to 2179-2186 (MSPKGISR). The segment at residues 2187–2207 (MSMAKGTMAGCGYLMFLGGVE) is an intramembrane region (helical). Residues 2208 to 2209 (PT) lie on the Lumenal side of the membrane. The chain crosses the membrane as a helical span at residues 2210-2230 (HISYIMLIFFVLMVVVIPEPG). Over 2231–2241 (QQRSIQDNQVA) the chain is Cytoplasmic. Residues 2242–2256 (FLIIGILTLVSVVAA) form a helical membrane-spanning segment. Residues 2257-2293 (NELGMLEKTKEDLFGKKNLIPSGASPWSWPDLDLKPG) are Lumenal-facing. Residues 2294-2314 (AAWTVYVGIVTMLSPMLHHWI) constitute an intramembrane region (helical). Topologically, residues 2315–2360 (KVEYGNLSLSGIAQSASVLSFMDKGIPFMKMNISVIMLLVSGWNSI) are lumenal. The helical transmembrane segment at 2361-2380 (TVMPLLCGIGCAMLHWSLIL) threads the bilayer. Topologically, residues 2381–2421 (PGIKAQQSKLAQRRVFHGVAKNPVVDGNPTVDIEEAPEMPA) are cytoplasmic. The chain crosses the membrane as a helical span at residues 2422-2442 (LYEKKLALYLLLALSLASVAM). Residues 2443-2445 (CRT) lie on the Lumenal side of the membrane. The chain crosses the membrane as a helical span at residues 2446 to 2466 (PFSLDEGIVLASAALGPLIEG). The Cytoplasmic segment spans residues 2467–3411 (NTSLLWNGPM…DADLQPGELI (945 aa)). The 265-residue stretch at 2507–2771 (GTANGKTLGE…DVTLPIGTRS (265 aa)) folds into the mRNA cap 0-1 NS5-type MT domain. Ser-2562 serves as a coordination point for S-adenosyl-L-methionine. Ser-2562 carries the post-translational modification Phosphoserine. Lys-2567 (for 2'-O-MTase activity) is an active-site residue. S-adenosyl-L-methionine is bound by residues Gly-2592, Trp-2593, Thr-2610, Leu-2611, Asp-2637, and Val-2638. Catalysis depends on Asp-2652, which acts as the For 2'-O-MTase activity. S-adenosyl-L-methionine is bound at residue Ile-2653. Residues Lys-2688 and Glu-2724 each act as for 2'-O-MTase activity in the active site. Tyr-2726 serves as a coordination point for S-adenosyl-L-methionine. The Nuclear localization signal signature appears at 2878–2911 (RKIMKVVNRWLFRHLAREKNPRLCTKEEFIAKVR). Zn(2+)-binding residues include Glu-2945, His-2949, Cys-2954, and Cys-2957. A RdRp catalytic domain is found at 3035–3187 (GGLYADDTAG…RPIDDRFGLA (153 aa)). Residues His-3222, Cys-3238, and Cys-3357 each coordinate Zn(2+).

In the N-terminal section; belongs to the class I-like SAM-binding methyltransferase superfamily. mRNA cap 0-1 NS5-type methyltransferase family. Homodimer. Interacts (via N-terminus) with host EXOC1 (via C-terminus); this interaction results in EXOC1 degradation through the proteasome degradation pathway. As to quaternary structure, forms heterodimers with envelope protein E in the endoplasmic reticulum and Golgi. In terms of assembly, homodimer; in the endoplasmic reticulum and Golgi. Interacts with protein prM. Interacts with non-structural protein 1. Homodimer; Homohexamer when secreted. Interacts with envelope protein E. As to quaternary structure, interacts (via N-terminus) with serine protease NS3. In terms of assembly, forms a heterodimer with serine protease NS3. May form homooligomers. Forms a heterodimer with NS2B. Interacts with non-structural protein 2A (via N-terminus). Interacts with NS4B. Interacts with unphosphorylated RNA-directed RNA polymerase NS5; this interaction stimulates RNA-directed RNA polymerase NS5 guanylyltransferase activity. NS3 interacts with host PDCD6IP; this interaction contributes to virion release. As to quaternary structure, interacts with serine protease NS3. In terms of assembly, homodimer. Interacts with host STAT2; this interaction prevents the establishment of cellular antiviral state. Interacts with serine protease NS3. Interacts with host TRIM23; this interaction leads to NS5 ubiquitination. Post-translationally, specific enzymatic cleavages in vivo yield mature proteins. The nascent capsid protein C contains a C-terminal hydrophobic domain that act as a signal sequence for translocation of prM into the lumen of the ER. Mature capsid protein C is cleaved at a site upstream of this hydrophobic domain by NS3. prM is cleaved in post-Golgi vesicles by a host furin, releasing the mature small envelope protein M, and peptide pr. Non-structural protein 2A-alpha, a C-terminally truncated form of non-structural protein 2A, results from partial cleavage by NS3. Specific enzymatic cleavages in vivo yield mature proteins peptide 2K acts as a signal sequence and is removed from the N-terminus of NS4B by the host signal peptidase in the ER lumen. Signal cleavage at the 2K-4B site requires a prior NS3 protease-mediated cleavage at the 4A-2K site. Cleaved in post-Golgi vesicles by a host furin, releasing the mature small envelope protein M, and peptide pr. This cleavage is incomplete as up to 30% of viral particles still carry uncleaved prM. In terms of processing, N-glycosylated. Post-translationally, N-glycosylated. The excreted form is glycosylated and this is required for efficient secretion of the protein from infected cells. Polyubiquitinated; ubiquitination is probably mediated by host TRIM23 and is prerequisite for NS5-STAT2 interaction. NS5 is not ISGylated or sumoylated. In terms of processing, acetylated by host KAT5. Acetylation modulates NS3 RNA-binding and unwinding activities and plays an important positive role for viral replication. Post-translationally, phosphorylated on serines residues. This phosphorylation may trigger NS5 nuclear localization.

Its subcellular location is the virion. The protein localises to the host nucleus. It is found in the host cytoplasm. It localises to the host perinuclear region. The protein resides in the secreted. Its subcellular location is the virion membrane. The protein localises to the host endoplasmic reticulum membrane. The catalysed reaction is Selective hydrolysis of -Xaa-Xaa-|-Yaa- bonds in which each of the Xaa can be either Arg or Lys and Yaa can be either Ser or Ala.. The enzyme catalyses RNA(n) + a ribonucleoside 5'-triphosphate = RNA(n+1) + diphosphate. It catalyses the reaction a ribonucleoside 5'-triphosphate + H2O = a ribonucleoside 5'-diphosphate + phosphate + H(+). It carries out the reaction ATP + H2O = ADP + phosphate + H(+). The catalysed reaction is a 5'-end (5'-triphosphoguanosine)-ribonucleoside in mRNA + S-adenosyl-L-methionine = a 5'-end (N(7)-methyl 5'-triphosphoguanosine)-ribonucleoside in mRNA + S-adenosyl-L-homocysteine. The enzyme catalyses a 5'-end (N(7)-methyl 5'-triphosphoguanosine)-ribonucleoside in mRNA + S-adenosyl-L-methionine = a 5'-end (N(7)-methyl 5'-triphosphoguanosine)-(2'-O-methyl-ribonucleoside) in mRNA + S-adenosyl-L-homocysteine + H(+). Its function is as follows. Plays a role in virus budding by binding to the cell membrane and gathering the viral RNA into a nucleocapsid that forms the core of a mature virus particle. During virus entry, may induce genome penetration into the host cytoplasm after hemifusion induced by the surface proteins. Can migrate to the cell nucleus where it modulates host functions. Functionally, inhibits RNA silencing by interfering with host Dicer. Prevents premature fusion activity of envelope proteins in trans-Golgi by binding to envelope protein E at pH6.0. After virion release in extracellular space, gets dissociated from E dimers. In terms of biological role, acts as a chaperone for envelope protein E during intracellular virion assembly by masking and inactivating envelope protein E fusion peptide. prM is the only viral peptide matured by host furin in the trans-Golgi network probably to avoid catastrophic activation of the viral fusion activity in acidic Golgi compartment prior to virion release. prM-E cleavage is inefficient, and many virions are only partially matured. These uncleaved prM would play a role in immune evasion. Its function is as follows. May play a role in virus budding. Exerts cytotoxic effects by activating a mitochondrial apoptotic pathway through M ectodomain. May display a viroporin activity. Functionally, binds to host cell surface receptor and mediates fusion between viral and cellular membranes. Envelope protein is synthesized in the endoplasmic reticulum in the form of heterodimer with protein prM. They play a role in virion budding in the ER, and the newly formed immature particle is covered with 60 spikes composed of heterodimer between precursor prM and envelope protein E. The virion is transported to the Golgi apparatus where the low pH causes dissociation of PrM-E heterodimers and formation of E homodimers. prM-E cleavage is inefficient, and many virions are only partially matured. These uncleaved prM would play a role in immune evasion. Involved in immune evasion, pathogenesis and viral replication. Once cleaved off the polyprotein, is targeted to three destinations: the viral replication cycle, the plasma membrane and the extracellular compartment. Essential for viral replication. Required for formation of the replication complex and recruitment of other non-structural proteins to the ER-derived membrane structures. Excreted as a hexameric lipoparticle that plays a role against host immune response. Antagonizing the complement function. Binds to the host macrophages and dendritic cells. Inhibits signal transduction originating from Toll-like receptor 3 (TLR3). In terms of biological role, component of the viral RNA replication complex that functions in virion assembly and antagonizes the host immune response. Its function is as follows. Required cofactor for the serine protease function of NS3. May have membrane-destabilizing activity and form viroporins. Functionally, displays three enzymatic activities: serine protease, NTPase and RNA helicase. NS3 serine protease, in association with NS2B, performs its autocleavage and cleaves the polyprotein at dibasic sites in the cytoplasm: C-prM, NS2A-NS2B, NS2B-NS3, NS3-NS4A, NS4A-2K and NS4B-NS5. NS3 RNA helicase binds RNA and unwinds dsRNA in the 3' to 5' direction. Also plays a role in virus assembly. Regulates the ATPase activity of the NS3 helicase activity. NS4A allows NS3 helicase to conserve energy during unwinding. In terms of biological role, functions as a signal peptide for NS4B and is required for the interferon antagonism activity of the latter. Its function is as follows. Induces the formation of ER-derived membrane vesicles where the viral replication takes place. Inhibits interferon (IFN)-induced host STAT1 phosphorylation and nuclear translocation, thereby preventing the establishment of cellular antiviral state by blocking the IFN-alpha/beta pathway. Functionally, replicates the viral (+) and (-) RNA genome, and performs the capping of genomes in the cytoplasm. NS5 methylates viral RNA cap at guanine N-7 and ribose 2'-O positions. Besides its role in RNA genome replication, also prevents the establishment of cellular antiviral state by blocking the interferon-alpha/beta (IFN-alpha/beta) signaling pathway. IFN-I induces binding of NS5 to host IFN-activated transcription factor STAT2, preventing its transcriptional activity. Host TRIM23 is the E3 ligase that interacts with and polyubiquitinates NS5 to promote its binding to STAT2 and trigger IFN-I signaling inhibition. This chain is Genome polyprotein, found in Aedes aegypti (Yellowfever mosquito).